A 696-amino-acid chain; its full sequence is DNA-directed RNA polymerase subunit beta' (696 aa).

Cys-69, Cys-71, Cys-87, and Cys-90 together coordinate Zn(2+). Residues Asp-504, Asp-506, and Asp-508 each contribute to the Mg(2+) site.

It belongs to the RNA polymerase beta' chain family. RpoC1 subfamily. As to quaternary structure, in plastids the minimal PEP RNA polymerase catalytic core is composed of four subunits: alpha, beta, beta', and beta''. When a (nuclear-encoded) sigma factor is associated with the core the holoenzyme is formed, which can initiate transcription. The cofactor is Mg(2+). Zn(2+) is required as a cofactor.

Its subcellular location is the plastid. The protein resides in the chloroplast. It catalyses the reaction RNA(n) + a ribonucleoside 5'-triphosphate = RNA(n+1) + diphosphate. DNA-dependent RNA polymerase catalyzes the transcription of DNA into RNA using the four ribonucleoside triphosphates as substrates. This chain is DNA-directed RNA polymerase subunit beta', found in Pinus thunbergii (Japanese black pine).